The chain runs to 303 residues: Kynurenine formamidase (303 aa).

Residues 95–99 (HGGYW) carry the HGGXW motif. Catalysis depends on Ser-164, which acts as the Nucleophile. Catalysis depends on residues Asp-247 and His-279.

It belongs to the kynurenine formamidase family. As to quaternary structure, homodimer.

Its subcellular location is the cytoplasm. It localises to the cytosol. The protein resides in the nucleus. It carries out the reaction N-formyl-L-kynurenine + H2O = L-kynurenine + formate + H(+). The protein operates within amino-acid degradation; L-tryptophan degradation via kynurenine pathway; L-kynurenine from L-tryptophan: step 2/2. Its function is as follows. Catalyzes the hydrolysis of N-formyl-L-kynurenine to L-kynurenine, the second step in the kynurenine pathway of tryptophan degradation. Kynurenine may be further oxidized to nicotinic acid, NAD(H) and NADP(H). Required for elimination of toxic metabolites. This Homo sapiens (Human) protein is Kynurenine formamidase.